Here is a 305-residue protein sequence, read N- to C-terminus: MVEPTAFIDEKIAEIADDVGDANAVIALSGGVDSSTAAALAYEAIGDQLTPVYVDTGLMRKGETDQIRDTFDYMDSLRIIDARDRFLDALSGITDPEEKRHAIGEQFIREFETVARDVDADYLVQGTIYPDRIESEGTIKSHHNVGGLPEVVDFEGIVEPMRDLYKDEVREVARELDLESIIAERMPFPGPGLAIRVLGEVTDEKLAVAREANHVVEEELEEYEPWQALAAVLGKATGVKGDNRVHGWVVSVRSVESRDGMTARAQELDWETLQRIQSRITGENENVARVVYDVTHKPPATIEYE.

In terms of domain architecture, GMPS ATP-PPase spans 2–185; it reads VEPTAFIDEK…LDLESIIAER (184 aa). 29–35 provides a ligand contact to ATP; it reads SGGVDSS.

In terms of assembly, heterodimer composed of a glutamine amidotransferase subunit (A) and a GMP-binding subunit (B).

The enzyme catalyses XMP + L-glutamine + ATP + H2O = GMP + L-glutamate + AMP + diphosphate + 2 H(+). The protein operates within purine metabolism; GMP biosynthesis; GMP from XMP (L-Gln route): step 1/1. Functionally, catalyzes the synthesis of GMP from XMP. The sequence is that of GMP synthase [glutamine-hydrolyzing] subunit B from Natronomonas pharaonis (strain ATCC 35678 / DSM 2160 / CIP 103997 / JCM 8858 / NBRC 14720 / NCIMB 2260 / Gabara) (Halobacterium pharaonis).